The following is a 1465-amino-acid chain: Neuropathy target esterase sws (1465 aa).

Over 1–34 (MDVLEMLRASASGSYNTIFSEAWCQYVSKQITAT) the chain is Lumenal. Residues 35 to 55 (MYMYCALGMMGVLFLAWFMYF) traverse the membrane as a helical segment. Topologically, residues 56–1465 (KRMARLRLRD…RSSANNETKN (1410 aa)) are cytoplasmic. 174 to 301 (IFGHFEKPVF…IRVIQVIMIR (128 aa)) serves as a coordination point for a nucleoside 3',5'-cyclic phosphate. Polar residues-rich tracts occupy residues 331–349 (STMS…RQTP) and 434–454 (QQSV…TPDG). 2 disordered regions span residues 331-421 (STMS…TEVH) and 434-460 (QQSV…SCPP). Phosphoserine occurs at positions 446 and 455. Residues 484–611 (ELGL…VVRR) and 600–727 (IVLD…LSHR) contribute to the a nucleoside 3',5'-cyclic phosphate site. The PNPLA domain occupies 954-1120 (LVLGGGGARG…VNNLPGHLWR (167 aa)). The GXGXXG signature appears at 958–963 (GGGARG). Residues 985–989 (GVSIG) carry the GXSXG motif. Ser987 (nucleophile) is an active-site residue. The active-site Proton acceptor is Asp1107. A DGA/G motif is present at residues 1107-1109 (DGG). Ser1201 is modified (phosphoserine). The disordered stretch occupies residues 1371–1465 (LERKTDKSTQ…RSSANNETKN (95 aa)). Residues 1378 to 1390 (STQSSPPTSSRTS) show a composition bias toward low complexity. Positions 1392–1402 (RGKEEARHMDN) are enriched in basic and acidic residues. The segment covering 1413–1424 (TGSGATEGIHTS) has biased composition (polar residues). Positions 1447 to 1456 (VYKDEDKENR) are enriched in basic and acidic residues.

This sequence belongs to the NTE family. In terms of assembly, interacts with Pka-C3; interaction inhibits the catalytic function of Pka-C3 and the esterase activity of sws.

Its subcellular location is the endoplasmic reticulum membrane. It catalyses the reaction a 1-acyl-sn-glycero-3-phosphocholine + H2O = sn-glycerol 3-phosphocholine + a fatty acid + H(+). Phospholipase B that deacylates intracellular phosphatidylcholine (PtdCho), generating glycerophosphocholine (GroPtdCho). This deacylation occurs at both sn-2 and sn-1 positions of PtdCho. Its specific chemical modification by certain organophosphorus (OP) compounds leads to distal axonopathy. Plays a role in the signaling mechanism between neurons and glia that regulates glia wrapping during development of the adult brain. Essential for membrane lipid homeostasis and cell survival in both neurons and glia of the adult brain. This Drosophila erecta (Fruit fly) protein is Neuropathy target esterase sws.